A 239-amino-acid chain; its full sequence is Octanoyl-[acyl-carrier-protein]:protein N-octanoyltransferase LIPT2, mitochondrial (239 aa).

A mitochondrion-targeting transit peptide spans 1-18 (MSVPVLRVRRLGLVGYAE). The BPL/LPL catalytic domain maps to 37 to 217 (GSPGGALLLC…AFEEEFQCQL (181 aa)). Substrate contacts are provided by residues 81 to 88 (RGGLITFH), 147 to 149 (AIG), and 160 to 162 (GLA). C178 serves as the catalytic Acyl-thioester intermediate. Residues 220 to 239 (EQNPEQNPVQNRPDRDAGPL) are disordered.

This sequence belongs to the LipB family.

Its subcellular location is the mitochondrion. It catalyses the reaction octanoyl-[ACP] + L-lysyl-[protein] = N(6)-octanoyl-L-lysyl-[protein] + holo-[ACP] + H(+). The protein operates within protein modification; protein lipoylation via endogenous pathway; protein N(6)-(lipoyl)lysine from octanoyl-[acyl-carrier-protein]: step 1/2. Its function is as follows. Catalyzes the transfer of endogenously produced octanoic acid from octanoyl-acyl-carrier-protein (octanoyl-ACP) onto the lipoyl domains of lipoate-dependent enzymes such as the protein H of the glycine cleavage system (GCSH). Lipoyl-ACP can also act as a substrate although octanoyl-ACP is likely to be the physiological substrate. In Xenopus tropicalis (Western clawed frog), this protein is Octanoyl-[acyl-carrier-protein]:protein N-octanoyltransferase LIPT2, mitochondrial (lipt2).